The sequence spans 750 residues: (13E)-labda-7,13-dien-15-ol synthase (750 aa).

The Mg(2+) site is built by Asp284, Asp286, Asp501, Asp505, Asn647, Thr651, and Glu655. Positions 284-287 (DIDD) match the DXDD motif motif. Positions 501-505 (DDLAD) match the DDXXD motif motif.

Belongs to the terpene synthase family. Mg(2+) is required as a cofactor.

The catalysed reaction is geranylgeranyl diphosphate + H2O = (13E)-labda-7,13-dien-15-ol + diphosphate. It participates in secondary metabolite biosynthesis; terpenoid biosynthesis. Functionally, bifunctional diterpene synthase that directly generates the endocyclic double bond, as well as the hydroxyl group: produces an endocyclic double bond isomer of copalyl diphosphate (CPP), and carries out subsequent replacement of the diphosphate by a hydroxyl group to form (13E)-labda-7,13-dien-15-ol. The polypeptide is (13E)-labda-7,13-dien-15-ol synthase (Selaginella moellendorffii (Spikemoss)).